We begin with the raw amino-acid sequence, 367 residues long: CCN family member 4 (367 aa).

An N-terminal signal peptide occupies residues 1–22; sequence MRWFLPWTLAAVTAAAASTVLA. The 74-residue stretch at 45 to 118 folds into the IGFBP N-terminal domain; that stretch reads RPQFCKWPCE…RYAIGVCAQV (74 aa). Intrachain disulfides connect Cys-49/Cys-73, Cys-53/Cys-75, Cys-55/Cys-76, and Cys-62/Cys-79. Asn-86 is a glycosylation site (N-linked (GlcNAc...) asparagine). 2 disulfides stabilise this stretch: Cys-87–Cys-101 and Cys-93–Cys-115. In terms of domain architecture, VWFC spans 121-186; sequence VGCVLDGVRY…GHCCEQWVCE (66 aa). An N-linked (GlcNAc...) asparagine glycan is attached at Asn-143. In terms of domain architecture, TSP type-1 spans 215-260; it reads NCIAYTSPWSPCSTSCGLGVSTRISNVNAQCWPEQESRLCNLRPCD. 5 disulfides stabilise this stretch: Cys-273-Cys-310, Cys-290-Cys-324, Cys-301-Cys-340, Cys-304-Cys-342, and Cys-309-Cys-346. One can recognise a CTCK domain in the interval 273–347; that stretch reads CLAVYQPEAS…NACFCNLSCR (75 aa). N-linked (GlcNAc...) asparagine glycosylation occurs at Asn-284. A glycan (N-linked (GlcNAc...) asparagine) is linked at Asn-343.

It belongs to the CCN family. Expressed in heart, kidney, lung, pancreas, placenta, ovary, small intestine and spleen. Isoform 2 is expressed predominantly in scirrhous gastric carcinoma and, weakly in placenta. Overexpression is associated with several cancers including breast cancer and colon tumors. Isoform 2 is overexpressed in scirrhous gastric carcinoma.

It is found in the secreted. Downstream regulator in the Wnt/Frizzled-signaling pathway. Associated with cell survival. Attenuates p53-mediated apoptosis in response to DNA damage through activation of AKT kinase. Up-regulates the anti-apoptotic Bcl-X(L) protein. Adheres to skin and melanoma fibroblasts. In vitro binding to skin fibroblasts occurs through the proteoglycans, decorin and biglycan. This is CCN family member 4 from Homo sapiens (Human).